The primary structure comprises 746 residues: 4-hydroxy-3-methylbut-2-en-1-yl diphosphate synthase (flavodoxin) (746 aa).

Cys653, Cys656, Cys687, and Glu694 together coordinate [4Fe-4S] cluster.

This sequence belongs to the IspG family. The cofactor is [4Fe-4S] cluster.

It catalyses the reaction (2E)-4-hydroxy-3-methylbut-2-enyl diphosphate + oxidized [flavodoxin] + H2O + 2 H(+) = 2-C-methyl-D-erythritol 2,4-cyclic diphosphate + reduced [flavodoxin]. Its pathway is isoprenoid biosynthesis; isopentenyl diphosphate biosynthesis via DXP pathway; isopentenyl diphosphate from 1-deoxy-D-xylulose 5-phosphate: step 5/6. Functionally, converts 2C-methyl-D-erythritol 2,4-cyclodiphosphate (ME-2,4cPP) into 1-hydroxy-2-methyl-2-(E)-butenyl 4-diphosphate. The polypeptide is 4-hydroxy-3-methylbut-2-en-1-yl diphosphate synthase (flavodoxin) (Chlorobaculum tepidum (strain ATCC 49652 / DSM 12025 / NBRC 103806 / TLS) (Chlorobium tepidum)).